Here is a 241-residue protein sequence, read N- to C-terminus: Ribonuclease 3 (241 aa).

Positions 16-144 (HAEFEKKINY…VIGAIFQDGG (129 aa)) constitute an RNase III domain. Glu-57 contacts Mg(2+). Residues Asp-61 and Glu-133 contribute to the active site. Glu-133 contacts Mg(2+). The DRBM domain maps to 171–240 (DAKSRLQEIL…AALAIKKIES (70 aa)).

It belongs to the ribonuclease III family. In terms of assembly, homodimer. Mg(2+) serves as cofactor.

The protein localises to the cytoplasm. The catalysed reaction is Endonucleolytic cleavage to 5'-phosphomonoester.. Functionally, digests double-stranded RNA. Involved in the processing of primary rRNA transcript to yield the immediate precursors to the large and small rRNAs (23S and 16S). Processes some mRNAs, and tRNAs when they are encoded in the rRNA operon. Processes pre-crRNA and tracrRNA of type II CRISPR loci if present in the organism. This Desulfotalea psychrophila (strain LSv54 / DSM 12343) protein is Ribonuclease 3.